A 419-amino-acid polypeptide reads, in one-letter code: Creatine kinase S-type, mitochondrial (419 aa).

Residues 1–39 (MASAFSKLLTGRNASLLFTTLGTSALTTGYLLNRQKVSA) constitute a mitochondrion transit peptide. The interval 40-64 (DAREQHKLFPPSADYPDLRKHNNCM) is cardiolipin-binding. The Phosphagen kinase N-terminal domain occupies 46-132 (KLFPPSADYP…FDPVIKLRHN (87 aa)). One can recognise a Phosphagen kinase C-terminal domain in the interval 159-401 (YVLSSRVRTG…NYLVDCEKKL (243 aa)). Residues 162 to 166 (SSRVR) and histidine 225 each bind ATP. Tyrosine 255 carries the post-translational modification Phosphotyrosine. Residues arginine 270, arginine 326, 354–359 (RGTGGV), and aspartate 369 each bind ATP. Threonine 356 carries the phosphothreonine modification.

Belongs to the ATP:guanido phosphotransferase family. In terms of assembly, exists as an octamer composed of four CKMT2 homodimers.

The protein localises to the mitochondrion inner membrane. It catalyses the reaction creatine + ATP = N-phosphocreatine + ADP + H(+). Its function is as follows. Reversibly catalyzes the transfer of phosphate between ATP and various phosphogens (e.g. creatine phosphate). Creatine kinase isoenzymes play a central role in energy transduction in tissues with large, fluctuating energy demands, such as skeletal muscle, heart, brain and spermatozoa. In Mus musculus (Mouse), this protein is Creatine kinase S-type, mitochondrial (Ckmt2).